Reading from the N-terminus, the 220-residue chain is Probable septum site-determining protein MinC (220 aa).

The protein belongs to the MinC family. As to quaternary structure, interacts with MinD and FtsZ.

Its function is as follows. Cell division inhibitor that blocks the formation of polar Z ring septums. Rapidly oscillates between the poles of the cell to destabilize FtsZ filaments that have formed before they mature into polar Z rings. Prevents FtsZ polymerization. This is Probable septum site-determining protein MinC from Photobacterium profundum (strain SS9).